The sequence spans 327 residues: MSAVQEALPAVRSSRDATVRRFALTDAIFHATTRAAAILVLVLLGGVAISLFAGSWQALSTFGFSFLTSESWNPVTEKFGALAPIYGTVITSAIAILIAVPLGIGIAIFLTELCPRPLRRPIGMAVELLAGIPSIIYGIWGLFVLAPFLQTTVQPLIISMFHGIPGLNGLFAGPPYGIGLLTSAMILAIMILPFITSITKDVFDTVPSVLKESAYGIGCTTWEVTRRVVIPYTRIGIMGGVMLALGRALGETMAVTFVIGNAHRISTSLFAPATTISATIANEFTEAVGDLYTSSLVALGLILFVITFLILAIARYMLMRIDARTGA.

The next 6 membrane-spanning stretches (helical) occupy residues 36–56, 89–109, 128–148, 178–198, 235–255, and 294–314; these read AAIL…AGSW, VITS…IAIF, LLAG…LAPF, IGLL…ITSI, IGIM…TMAV, and SSLV…LAIA. Positions 85–314 constitute an ABC transmembrane type-1 domain; it reads IYGTVITSAI…VITFLILAIA (230 aa).

The protein belongs to the binding-protein-dependent transport system permease family. CysTW subfamily.

It is found in the cell inner membrane. In terms of biological role, part of a binding-protein-dependent transport system for phosphate; probably responsible for the translocation of the substrate across the membrane. In Mesorhizobium japonicum (strain LMG 29417 / CECT 9101 / MAFF 303099) (Mesorhizobium loti (strain MAFF 303099)), this protein is Phosphate transport system permease protein PstC (pstC).